The following is a 527-amino-acid chain: MAQTLQMEIPNFGNSILECLNEQRLQGLYCDVSVVVKGHAFKAHRAVLAASSSYFRDLFNNSRSAVVELPAAVQPQSFQQILSFCYTGRLSMNVGDQFLLMYTAGFLQIQEIMEKGTEFFLKVSSPSCDSQGLHAEEAPSSEPQSPVAQTSGWPACSTPLPLVSRVKTEQQESDSVQCMPVAKRLWDSGQKEAGGGGNGSRKMAKFSTPDLAANRPHQPPPPQQAPVVAAAQPAVAAGAGQPAGGVAAAGGVVSGPSTSERTSPGTSSAYTSDSPGSYHNEEDEEEDGGEEGMDEQYRQICNMYTMYSMMNVGQTAEKVEALPEQVAPESRNRIRVRQDLASLPAELINQIGNRCHPKLYDEGDPSEKLELVTGTNVYITRAQLMNCHVSAGTRHKVLLRRLLASFFDRNTLANSCGTGIRSSTNDPRRKPLDSRVLHAVKYYCQNFAPNFKESEMNAIAADMCTNARRVVRKSWMPKVKVLKAEDDAYTTFISETGKIEPDMMGVEHGFETASHEGEAGPSAEALQ.

The region spanning Cys30 to Val94 is the BTB domain. The segment at Gln131–Trp153 is disordered. Polar residues predominate over residues Ser141–Gly152. A Glycyl lysine isopeptide (Lys-Gly) (interchain with G-Cter in SUMO1); alternate cross-link involves residue Lys167. A Glycyl lysine isopeptide (Lys-Gly) (interchain with G-Cter in SUMO2); alternate cross-link involves residue Lys167. Residue Lys183 forms a Glycyl lysine isopeptide (Lys-Gly) (interchain with G-Cter in SUMO2) linkage. Ser188 bears the Phosphoserine mark. A disordered region spans residues Asp210–Gly292. Low complexity predominate over residues Ala225–Gly251. The span at Gly255 to Ser277 shows a compositional bias: polar residues. A Phosphoserine; by PKC modification is found at Ser259. A compositionally biased stretch (acidic residues) spans Glu281–Gly292. Glycyl lysine isopeptide (Lys-Gly) (interchain with G-Cter in SUMO2) cross-links involve residues Lys318, Lys452, Lys480, Lys483, and Lys498. One can recognise a BEN domain in the interval Gly374–Val471.

In terms of assembly, homooligomer; mediated by the BTB domain. Interacts with HDAC3 and HDAC4. Interacts (via BTB domain) with CUL3, PSMD7 and RCOR1. As to expression, overexpressed in several types of carcinomas including ovarian serous carcinomas. Expression levels positively correlate with tumor recurrence in ovarian serous carcinomas, and intense immunoreactivity in primary ovarian tumors predicts early recurrence. Up-regulated in ovarian carcinomas after chemotherapy, suggesting a role in development of chemotherapy resistance in ovarian cancer.

It is found in the nucleus. It localises to the cytoplasm. Its function is as follows. Functions as a transcriptional repressor. Seems to function as a transcriptional corepressor in neuronal cells through recruitment of HDAC3 and HDAC4. Contributes to tumor progression, and tumor cell proliferation and survival. This may be mediated at least in part through repressing transcriptional activity of GADD45GIP1. Required for recruiting the proteasome from the nucleus to the cytoplasm and dendritic spines. This chain is Nucleus accumbens-associated protein 1 (NACC1), found in Homo sapiens (Human).